Here is a 389-residue protein sequence, read N- to C-terminus: Phospho-N-acetylmuramoyl-pentapeptide-transferase (389 aa).

10 helical membrane passes run 25–45, 73–93, 97–117, 135–155, 189–209, 222–242, 259–279, 286–306, 311–331, and 366–386; these read RAVA…PWVI, TMGG…WADL, FIWI…VDDY, FWQS…VSEA, SMTY…VIVG, GLVI…AYVM, AGEM…FLWF, VFMG…IAVI, IVLF…MLQV, and QVVV…LSTL.

The protein belongs to the glycosyltransferase 4 family. MraY subfamily. Mg(2+) serves as cofactor.

It localises to the cell inner membrane. The enzyme catalyses UDP-N-acetyl-alpha-D-muramoyl-L-alanyl-gamma-D-glutamyl-meso-2,6-diaminopimeloyl-D-alanyl-D-alanine + di-trans,octa-cis-undecaprenyl phosphate = di-trans,octa-cis-undecaprenyl diphospho-N-acetyl-alpha-D-muramoyl-L-alanyl-D-glutamyl-meso-2,6-diaminopimeloyl-D-alanyl-D-alanine + UMP. It participates in cell wall biogenesis; peptidoglycan biosynthesis. Its function is as follows. Catalyzes the initial step of the lipid cycle reactions in the biosynthesis of the cell wall peptidoglycan: transfers peptidoglycan precursor phospho-MurNAc-pentapeptide from UDP-MurNAc-pentapeptide onto the lipid carrier undecaprenyl phosphate, yielding undecaprenyl-pyrophosphoryl-MurNAc-pentapeptide, known as lipid I. This is Phospho-N-acetylmuramoyl-pentapeptide-transferase from Paraburkholderia phymatum (strain DSM 17167 / CIP 108236 / LMG 21445 / STM815) (Burkholderia phymatum).